The following is a 4239-amino-acid chain: Tenellin synthetase (4239 aa).

Positions 15-454 (SEPIAIIGSA…GTNAHAIIER (440 aa)) constitute a Ketosynthase family 3 (KS3) domain. Catalysis depends on for beta-ketoacyl synthase activity residues cysteine 189, histidine 326, and histidine 374. The tract at residues 589–923 (VFTGQGAQWP…ANDAVAFSTA (335 aa)) is malonyl-CoA:ACP transacylase (MAT) domain. An N-terminal hotdog fold region spans residues 993 to 1135 (HELLGRRTPD…GRIAVQLGAK (143 aa)). The tract at residues 993-1310 (HELLGRRTPD…GFEVRAVGEP (318 aa)) is dehydratase (DH) domain. A PKS/mFAS DH domain is found at 993–1313 (HELLGRRTPD…VRAVGEPDAS (321 aa)). The active-site Proton acceptor; for dehydratase activity is the histidine 1025. The tract at residues 1158-1313 (LQQLDCEKLY…VRAVGEPDAS (156 aa)) is C-terminal hotdog fold. Residue aspartate 1217 is the Proton donor; for dehydratase activity of the active site. A methyltransferase (MT) domain region spans residues 1459-1652 (RLYTEDKGMH…FSGVDHIVHD (194 aa)). Positions 2209–2382 (TYLMVGAAGG…AASIIHVGHV (174 aa)) are ketoreductase (KR) domain. A Carrier 1 domain is found at 2502-2582 (EAAVAALKGF…QLSALAAKLA (81 aa)). Residue serine 2542 is modified to O-(pantetheine 4'-phosphoryl)serine. Disordered stretches follow at residues 2587 to 2629 (KKRA…EIAQ) and 2642 to 2712 (LEAS…FFTQ). 2 stretches are compositionally biased toward polar residues: residues 2648–2662 (GGSS…SSVS) and 2670–2681 (ESTLQSSDNNGE). Over residues 2682-2698 (STPSKSSNCNSDSGSDN) the composition is skewed to low complexity. The tract at residues 2723 to 3169 (REAPMSPAQS…SAQSVGDCVV (447 aa)) is condensation (C) domain. The segment at 3203–3614 (CQQHSTKSAI…DGTLLCFGRI (412 aa)) is adenylation (A) (KR) domain. A disordered region spans residues 3728–3752 (EAAAATSPSNNNINNNTPSGGGGEK). The span at 3729-3745 (AAAATSPSNNNINNNTP) shows a compositional bias: low complexity. One can recognise a Carrier 2 domain in the interval 3751 to 3835 (EKMTVRQGEL…GMARCVAEQR (85 aa)). An O-(pantetheine 4'-phosphoryl)serine modification is found at serine 3795. The segment at 3862-3892 (EKLQHSSASSSSSSSSSSSAGSSSTQRPRKT) is disordered. The segment covering 3867-3885 (SSASSSSSSSSSSSAGSSS) has biased composition (low complexity). The interval 3899–4145 (LTGATGFLGG…LDFGQVDKVV (247 aa)) is reductase (RED) domain.

The protein in the C-terminal section; belongs to the NRP synthetase family.

The protein operates within secondary metabolite biosynthesis. Its function is as follows. Hybrid PKS-NRPS synthetase; part of the gene cluster that mediates the biosynthesis of tenellin-type 2-pyridones, iron-chelating compounds involved in iron stress tolerance, competition with the natural competitor fungus Metarhizium robertsii and insect hosts infection. TenS catalyzes the assembly of the polyketide-amino acid backbone. Because tenS lacks a designated enoylreductase (ER) domain, the required activity is provided the enoyl reductase tenC. Upon formation of the polyketide backbone on the thiotemplate, the triketide is transferred to the NRPS module and linked to tyrosine to produce the pyrrolidine-2-dione intermediates, including pretellinin A, 11-hydropretellenin A, 12-hydropretellenin A, 13-hydropretellenin A, 14-hydropretellenin A, 12-oxopretellenin A and prototellinin D. The pathway begins with the assembly of the polyketide-amino acid backbone by the hybrid PKS-NRPS tenS with the help of the enoyl reductase tenC. These enzymes catalyze the synthesis of the pyrrolidine-2-dione intermediates pretellinin A, 11-hydropretellenin A, 12-hydropretellenin A, 13-hydropretellenin A, 14-hydropretellenin A, 12-oxopretellenin A and prototellinin D. The cytochrome P450 monooxygenase tenA then catalyzes an oxidative ring expansion of pretenellin A and 14-hydropretellenin A to form the 2-pyridone core, leading to pretenellin B and pyridovericin, respectively. The cytochrome P450 monooxygenase tenB is then required for the selective N-hydroxylation of the 2-pyridone nitrogen of yield tellinin and 15-hydroxytellenin (15-HT), respectively. The UDP-glucosyltransferase GT1 and the methyltransferase MT1, located outside the tenS gene cluster, contribute to the stepwise glycosylation and methylation of 15-HT to obtain the glycoside pyridovericin-N-O-(4-O-methyl-beta-D-glucopyranoside) (PMGP). Additional related compounds such as 1-O-methyl-15-HT, (8Z)-1-O-methyl-15-HT, and O-methyltenellin A are also produced but the enzymes involved in their biosynthesis have still to be determined. This Beauveria bassiana (White muscardine disease fungus) protein is Tenellin synthetase.